Consider the following 104-residue polypeptide: DNA-directed RNA polymerase subunit omega (104 aa).

This sequence belongs to the RNA polymerase subunit omega family. In terms of assembly, the RNAP catalytic core consists of 2 alpha, 1 beta, 1 beta' and 1 omega subunit. When a sigma factor is associated with the core the holoenzyme is formed, which can initiate transcription.

The enzyme catalyses RNA(n) + a ribonucleoside 5'-triphosphate = RNA(n+1) + diphosphate. Its function is as follows. Promotes RNA polymerase assembly. Latches the N- and C-terminal regions of the beta' subunit thereby facilitating its interaction with the beta and alpha subunits. This chain is DNA-directed RNA polymerase subunit omega, found in Streptococcus agalactiae serotype Ia (strain ATCC 27591 / A909 / CDC SS700).